The primary structure comprises 50 residues: MKDFADRYTFIRQGKMLVVKILPKEIFVLSFRRIKDKELKKLLEKDYALR.

This is an uncharacterized protein from Haemophilus influenzae (strain ATCC 51907 / DSM 11121 / KW20 / Rd).